We begin with the raw amino-acid sequence, 409 residues long: Serine/threonine transporter SstT (409 aa).

The next 9 membrane-spanning stretches (helical) occupy residues 14 to 34 (GSLV…ATLS), 48 to 68 (FVGA…AASI), 82 to 102 (IVIL…LMSF), 141 to 161 (ALMT…GLAL), 192 to 212 (IGIF…AIAG), 216 to 236 (LLLV…PAIV), 290 to 310 (IPLG…ILTL), 322 to 342 (ILTA…ASGV), and 357 to 377 (FGIS…IGVI).

This sequence belongs to the dicarboxylate/amino acid:cation symporter (DAACS) (TC 2.A.23) family.

The protein localises to the cell inner membrane. It carries out the reaction L-serine(in) + Na(+)(in) = L-serine(out) + Na(+)(out). It catalyses the reaction L-threonine(in) + Na(+)(in) = L-threonine(out) + Na(+)(out). Functionally, involved in the import of serine and threonine into the cell, with the concomitant import of sodium (symport system). The polypeptide is Serine/threonine transporter SstT (Shewanella woodyi (strain ATCC 51908 / MS32)).